The sequence spans 143 residues: Large ribosomal subunit protein uL15 (143 aa).

Residues 1-52 form a disordered region; that stretch reads MKLNTLAPAAGSKSAPKRLGRGIGSGLGKTSGKGHKGQKARSGGYHKVGFEG. Positions 21 to 31 are enriched in gly residues; that stretch reads RGIGSGLGKTS.

The protein belongs to the universal ribosomal protein uL15 family. In terms of assembly, part of the 50S ribosomal subunit.

Functionally, binds to the 23S rRNA. In Francisella tularensis subsp. mediasiatica (strain FSC147), this protein is Large ribosomal subunit protein uL15.